The following is a 95-amino-acid chain: 6 kDa early secretory antigenic target (95 aa).

2 helical membrane-spanning segments follow: residues 11 to 43 (IEAA…AAAW) and 49 to 85 (EAYQ…AMAS). Residues 56-87 (QKWDATATELNNALQNLARTISEAGQAMASTE) are a coiled coil.

This sequence belongs to the WXG100 family. ESAT-6 subfamily. As to quaternary structure, forms a tight 1:1 complex with EsxB (CFP-10).

It is found in the secreted. It localises to the host membrane. In terms of biological role, a secreted protein. Acts as a strong host T-cell antigen. Plays a number of roles in modulating the host's immune response to infection as well as being responsible for bacterial escape into the host cytoplasm. The polypeptide is 6 kDa early secretory antigenic target (esxA) (Mycobacterium bovis (strain ATCC BAA-935 / AF2122/97)).